A 335-amino-acid polypeptide reads, in one-letter code: MESPAPGARCPVQEQRARWERKRACTARELLETERRYQEQLGLVATYFVAILRAKGTLRPPERQALFGPWELIYGASQELLPYLEGGRWGQGLEGFCNHLELYTQFAANVERSRTILQEQLKKNKHFRRFVRLQEGRPEFGGLQLQDLLPLPLQRLQQYENLAVALAENTGPNSPEHKQLTRAAQLISETAQRVHTIGQKQKNEQHLQRIQALLSGRQAKGLISGRWFLRQGWLLVVPPRGEPRPRMFFLFSDALLMAKPRPPLHLLQSGTFACRALYPMGECQLHRVFGHSGGPCGGLLSLSFPHEKLLLMSTDQEELSHWYHSLTLAISSQKN.

Residues 22–197 (KRACTARELL…SETAQRVHTI (176 aa)) enclose the DH domain. One can recognise a PH domain in the interval 227–331 (WFLRQGWLLV…WYHSLTLAIS (105 aa)).

It localises to the cell membrane. In terms of biological role, promotes cell proliferation. The polypeptide is Rho guanine nucleotide exchange factor 39 (ARHGEF39) (Bos taurus (Bovine)).